Consider the following 294-residue polypeptide: Probable ABC transporter permease protein YqgI (294 aa).

Transmembrane regions (helical) follow at residues 14–34 (FGLC…YIII), 66–86 (FYIL…GGVF), 99–121 (FIRT…FGLL), 126–148 (LTGW…LPVM), 190–210 (IITG…ALLF), and 260–280 (AIAN…NLAA). The ABC transmembrane type-1 domain maps to 62–280 (LFNSFYILFI…ISVLVFNLAA (219 aa)).

The protein belongs to the binding-protein-dependent transport system permease family. CysTW subfamily.

The protein localises to the cell membrane. Its function is as follows. Part of the binding-protein-dependent transport system YqgGHIJK. Probably responsible for the translocation of the substrate across the membrane. In Bacillus subtilis (strain 168), this protein is Probable ABC transporter permease protein YqgI (yqgI).